The sequence spans 307 residues: D-alanine--D-alanine ligase (307 aa).

Positions 104–301 (RTAFLAAGLP…FVSLCRWMVE (198 aa)) constitute an ATP-grasp domain. Position 130–183 (130–183 (PLPRPFVIKPANEGSAVGVHILHEGDNRRTEIARSWSFGGQALVEEYIPGRELT)) interacts with ATP. Residues aspartate 251, glutamate 268, and asparagine 270 each contribute to the Mg(2+) site.

This sequence belongs to the D-alanine--D-alanine ligase family. Mg(2+) serves as cofactor. Mn(2+) is required as a cofactor.

The protein resides in the cytoplasm. It catalyses the reaction 2 D-alanine + ATP = D-alanyl-D-alanine + ADP + phosphate + H(+). The protein operates within cell wall biogenesis; peptidoglycan biosynthesis. In terms of biological role, cell wall formation. The polypeptide is D-alanine--D-alanine ligase (Granulibacter bethesdensis (strain ATCC BAA-1260 / CGDNIH1)).